The sequence spans 401 residues: Acetate kinase (401 aa).

N7 lines the Mg(2+) pocket. K14 contacts ATP. R92 serves as a coordination point for substrate. Catalysis depends on D149, which acts as the Proton donor/acceptor. Residues 209–213, 283–285, and 331–335 contribute to the ATP site; these read HLGNG, DAR, and GLGEN. E385 lines the Mg(2+) pocket.

This sequence belongs to the acetokinase family. In terms of assembly, homodimer. Mg(2+) serves as cofactor. Requires Mn(2+) as cofactor.

Its subcellular location is the cytoplasm. The enzyme catalyses acetate + ATP = acetyl phosphate + ADP. The protein operates within metabolic intermediate biosynthesis; acetyl-CoA biosynthesis; acetyl-CoA from acetate: step 1/2. Functionally, catalyzes the formation of acetyl phosphate from acetate and ATP. Can also catalyze the reverse reaction. The chain is Acetate kinase from Helicobacter pylori (strain Shi470).